The chain runs to 274 residues: Thiazole synthase (274 aa).

The active-site Schiff-base intermediate with DXP is lysine 115. 1-deoxy-D-xylulose 5-phosphate-binding positions include glycine 176, 202 to 203 (AG), and 224 to 225 (NS).

Belongs to the ThiG family. As to quaternary structure, homotetramer. Forms heterodimers with either ThiH or ThiS.

It localises to the cytoplasm. The catalysed reaction is [ThiS sulfur-carrier protein]-C-terminal-Gly-aminoethanethioate + 2-iminoacetate + 1-deoxy-D-xylulose 5-phosphate = [ThiS sulfur-carrier protein]-C-terminal Gly-Gly + 2-[(2R,5Z)-2-carboxy-4-methylthiazol-5(2H)-ylidene]ethyl phosphate + 2 H2O + H(+). It participates in cofactor biosynthesis; thiamine diphosphate biosynthesis. Catalyzes the rearrangement of 1-deoxy-D-xylulose 5-phosphate (DXP) to produce the thiazole phosphate moiety of thiamine. Sulfur is provided by the thiocarboxylate moiety of the carrier protein ThiS. In vitro, sulfur can be provided by H(2)S. This chain is Thiazole synthase, found in Parasynechococcus marenigrum (strain WH8102).